The following is a 356-amino-acid chain: Vacuolar protein sorting-associated protein 26 (356 aa).

The segment at 301–356 (MRRPGTEDDEEEKQTTSIPGTQKFTAPAPVEHPKPESPRSDPKSGSTSPDDNSDSS) is disordered. Positions 315 to 324 (TTSIPGTQKF) are enriched in polar residues. Over residues 331 to 342 (EHPKPESPRSDP) the composition is skewed to basic and acidic residues.

This sequence belongs to the VPS26 family.

Its function is as follows. May play a role in vesicular protein sorting, similar to the yeast retromer proteins. The protein is Vacuolar protein sorting-associated protein 26 (vps-26) of Caenorhabditis elegans.